The following is a 637-amino-acid chain: 3D-(3,5/4)-trihydroxycyclohexane-1,2-dione hydrolase (637 aa).

E66 lines the thiamine diphosphate pocket. Residues 442–522 are thiamine pyrophosphate binding; it reads SLPGDLQRLW…INVLLFDNSG (81 aa). Residues D493 and N520 each contribute to the Mg(2+) site.

Belongs to the TPP enzyme family. It depends on Mg(2+) as a cofactor. Thiamine diphosphate serves as cofactor.

The enzyme catalyses 3D-3,5/4-trihydroxycyclohexane-1,2-dione + H2O = 5-deoxy-D-glucuronate + H(+). It participates in polyol metabolism; myo-inositol degradation into acetyl-CoA; acetyl-CoA from myo-inositol: step 3/7. Its function is as follows. Involved in the cleavage of the C1-C2 bond of 3D-(3,5/4)-trihydroxycyclohexane-1,2-dione (THcHDO) to yield 5-deoxy-glucuronate (5DG). The protein is 3D-(3,5/4)-trihydroxycyclohexane-1,2-dione hydrolase of Bacillus licheniformis (strain ATCC 14580 / DSM 13 / JCM 2505 / CCUG 7422 / NBRC 12200 / NCIMB 9375 / NCTC 10341 / NRRL NRS-1264 / Gibson 46).